Here is a 307-residue protein sequence, read N- to C-terminus: Mitochondrial brown fat uncoupling protein 1 (307 aa).

Residues 1–10 (MVSLTTSEVH) are Mitochondrial intermembrane-facing. A helical transmembrane segment spans residues 11 to 32 (PTMGVKTFSAGISACLADIITF). 3 Solcar repeats span residues 11-102 (PTMG…VQEY), 111-201 (PTLG…MKGA), and 210-295 (DDVP…LKKE). The Mitochondrial matrix portion of the chain corresponds to 33 to 73 (PLDTAKVRLQIQGEGQTSSTIRYKGVLGTITTLAKTEGWPK). A fatty acid 16:0-binding site is contributed by Lys-56. A helical membrane pass occupies residues 74–96 (LYSGLPAGIQRQISFASLRIGLY). Residues 97–116 (DTVQEYFSSGKETPPTLGNR) lie on the Mitochondrial intermembrane side of the membrane. The helical transmembrane segment at 117 to 133 (ISAGLMTGGVAVFIGQP) threads the bilayer. Residues 134–178 (TEVVKVRLQAQSHLHGIKPRYTGTYNAYRIIATTESFSTLWKGTT) are Mitochondrial matrix-facing. Residues 179–195 (PNLMRNVIINRTELVTY) traverse the membrane as a helical segment. Residues 196 to 212 (DLMKGALVNNQILADDV) lie on the Mitochondrial intermembrane side of the membrane. The chain crosses the membrane as a helical span at residues 213–232 (PCHLLSALVAGFCTTFLASP). At 233–266 (ADVVKTRFINSLPGQYPSVPSCAMTMLTKEGPTA) the chain is on the mitochondrial matrix side. Residue Cys-254 is modified to Cysteine sulfenic acid (-SOH). Residues 267 to 289 (FFKGFVPSFLRLASWNVIMFVCF) traverse the membrane as a helical segment. Residue Lys-269 coordinates fatty acid 16:0. Residues 290 to 307 (EQLKKELMKSRQTMDCTT) lie on the Mitochondrial intermembrane side of the membrane.

It belongs to the mitochondrial carrier (TC 2.A.29) family. As to quaternary structure, most probably functions as a monomer. Binds one purine nucleotide per monomer. However, has also been suggested to function as a homodimer or a homotetramer. Tightly associates with cardiolipin in the mitochondrion inner membrane; may stabilize and regulate its activity. Post-translationally, may undergo sulfenylation upon cold exposure. May increase the sensitivity of UCP1 thermogenic function to the activation by noradrenaline probably through structural effects. In terms of processing, may undergo ubiquitin-mediated proteasomal degradation.

The protein localises to the mitochondrion inner membrane. The catalysed reaction is H(+)(in) = H(+)(out). Has no constitutive proton transporter activity and has to be activated by long-chain fatty acids/LCFAs. Inhibited by purine nucleotides. Both purine nucleotides and LCFAs bind the cytosolic side of the transporter and directly compete to activate or inhibit it. Activated by noradrenaline and reactive oxygen species. Despite lacking canonical translational encoding for selenocysteine, a small pool of the protein has been observed to selectively incorporate selenocysteine at 'Cys-254'. Selenocysteine-modified protein is highly sensitive to redox modification and may constitute a pool of protein highly sensitive to activation by elevated levels of reactive oxygen species (ROS). Functionally, mitochondrial protein responsible for thermogenic respiration, a specialized capacity of brown adipose tissue and beige fat that participates in non-shivering adaptive thermogenesis to temperature and diet variations and more generally to the regulation of energy balance. Functions as a long-chain fatty acid/LCFA and proton symporter, simultaneously transporting one LCFA and one proton through the inner mitochondrial membrane. However, LCFAs remaining associated with the transporter via their hydrophobic tails, it results in an apparent transport of protons activated by LCFAs. Thereby, dissipates the mitochondrial proton gradient and converts the energy of substrate oxydation into heat instead of ATP. Regulates the production of reactive oxygen species/ROS by mitochondria. The sequence is that of Mitochondrial brown fat uncoupling protein 1 from Dicrostonyx groenlandicus (Northern collared lemming).